A 323-amino-acid chain; its full sequence is Quinolinate synthase (323 aa).

The iminosuccinate site is built by histidine 39 and serine 56. Cysteine 101 serves as a coordination point for [4Fe-4S] cluster. Iminosuccinate contacts are provided by residues 127-129 and serine 144; that span reads YIN. Cysteine 187 lines the [4Fe-4S] cluster pocket. Residues 213–215 and threonine 230 contribute to the iminosuccinate site; that span reads HPE. Cysteine 280 contacts [4Fe-4S] cluster.

It belongs to the quinolinate synthase family. Type 2 subfamily. [4Fe-4S] cluster is required as a cofactor.

The protein resides in the cytoplasm. The enzyme catalyses iminosuccinate + dihydroxyacetone phosphate = quinolinate + phosphate + 2 H2O + H(+). The protein operates within cofactor biosynthesis; NAD(+) biosynthesis; quinolinate from iminoaspartate: step 1/1. Catalyzes the condensation of iminoaspartate with dihydroxyacetone phosphate to form quinolinate. The protein is Quinolinate synthase of Chlorobium phaeobacteroides (strain DSM 266 / SMG 266 / 2430).